Consider the following 119-residue polypeptide: uncharacterized protein (119 aa).

A disordered region spans residues 67–119 (LGLKEVQKKSNEGLNEVQGVADINKQKRPANSQDSSSVEGDIQNFLEKVTGKN). Residues 95–104 (PANSQDSSSV) show a composition bias toward polar residues.

This is an uncharacterized protein from Anabaena variabilis.